The primary structure comprises 333 residues: Putative fimbrium anchoring subunit Fim4B (333 aa).

Positions 1–20 (MRNTRYGFLVLLSSLLMLTG) are cleaved as a signal peptide. A lipid anchor (N-palmitoyl cysteine) is attached at C21. C21 carries S-diacylglycerol cysteine lipidation. The disordered stretch occupies residues 274 to 333 (ENAGTGEDGKPTPPPEIELPPDDKIEVDKPETPPNPDGGGGMGGNVDGWGPEDNVELPVN). Basic and acidic residues predominate over residues 294–304 (PDDKIEVDKPE). Residues 310-320 (DGGGGMGGNVD) show a composition bias toward gly residues.

This sequence belongs to the bacteroidetes fimbrillin superfamily. FimB/Mfa2 family.

It is found in the cell outer membrane. Putative fimbrium anchoring subunit. The sequence is that of Putative fimbrium anchoring subunit Fim4B from Bacteroides ovatus (strain ATCC 8483 / DSM 1896 / JCM 5824 / BCRC 10623 / CCUG 4943 / NCTC 11153).